The sequence spans 321 residues: Basic leucine zipper 34 (321 aa).

The segment at 97–189 (TDDDNLHSNP…SGNRILDPKR (93 aa)) is disordered. Composition is skewed to low complexity over residues 110-133 (NNKN…NSFN), 145-155 (NMNNNINNNYN), and 172-182 (SNNNSGDSSGN). Residues 186-238 (DPKRVKRILANRQSAQRSRVRKLQYISELERSVTSLQAEVSVLSPRVAFLDHQ) enclose the bZIP domain. The interval 188–207 (KRVKRILANRQSAQRSRVRK) is basic motif. A leucine-zipper region spans residues 214 to 235 (LERSVTSLQAEVSVLSPRVAFL).

As to quaternary structure, forms heterodimers with BZIP18, BZIP43 and VIP1/BZIP51. In terms of tissue distribution, expressed in vascular tissues of leaves, stems and siliques, anthers, filaments, tapetum, mature pollen grains, pistil vascular tissues and papillar cells, and funiculi.

The protein resides in the nucleus. Functionally, transcriptional activator involved in the sporophytic control of cell wall patterning and gametophytic control of pollen development. May play a role in the control of metabolic pathways regulating cellular transport and lipid metabolism. This Arabidopsis thaliana (Mouse-ear cress) protein is Basic leucine zipper 34.